The following is a 506-amino-acid chain: MASSLLTSSVMIPTTGSTVVGRSVLPFQSSLHSLRLTHSYKNPALFISCCSSVSKNAATSSTDLKPVVERWPEYIPNKLPDGNYVRVFDTTLRDGEQSPGGSLTPPQKLEIARQLAKLRVDIMEVGFPGSSEEELETIKTIAKTVGNEVDEETGYVPVICAIARCKHRDIEATWEALKYAKRPRILVFTSTSDIHMKYKLKKTQEEVIEMAVSSIRFAKSLGFNDIQFGCEDGGRSDKDFLCKILGEAIKAGVTVVTIGDTVGINMPHEYGELVTYLKANTPGIDDVVVAVHCHNDLGLATANSIAGIRAGARQVEVTINGIGERSGNASLEEVVMALKCRGAYVINGVYTKIDTRQIMATSKMVQEYTGLYVQAHKPIVGANCFVHESGIHQDGILKNRSTYEILSPEDIGIVKSQNSGLVLGKLSGRHAVKDRLKELGYELDDEKLNAVFSLFRDLTKNKKRITDADLKALVTSSDEISLEKLNGANGLKSNGYIPVPQVSSNV.

Residues 1–49 (MASSLLTSSVMIPTTGSTVVGRSVLPFQSSLHSLRLTHSYKNPALFISC) constitute a chloroplast transit peptide. In terms of domain architecture, Pyruvate carboxyltransferase spans 85-359 (VRVFDTTLRD…YTKIDTRQIM (275 aa)). Ser-98 carries the phosphoserine modification.

The protein belongs to the alpha-IPM synthase/homocitrate synthase family. As to quaternary structure, monomer. The cofactor is Mn(2+). Highly expressed in leaves, flowers, roots and siliques. Not detected in flowers in PubMed:12432038.

Its subcellular location is the plastid. The protein resides in the chloroplast. The enzyme catalyses an omega-(methylsulfanyl)-2-oxoalkanoate + acetyl-CoA + H2O = a 2-(omega-methylsulfanyl)alkylmalate + CoA + H(+). 1 mM DTT required for activity. Activated by ATP and inhibited by iodoacetamide. In terms of biological role, determines the side chain length of aliphatic glucosinolate structures. Catalyzes exclusively the condensation reactions of both the first and second methionine carbon chain elongation. This is Methylthioalkylmalate synthase 1, chloroplastic (MAM1) from Arabidopsis thaliana (Mouse-ear cress).